A 951-amino-acid polypeptide reads, in one-letter code: MEKTYNPQDIEQPLYEHWEKQGYFKPNGDESQESFCIMIPPPNVTGSLHMGHAFQQTIMDTMIRYQRMQGKNTLWQVGTDHAGIATQMVVERKIAAEEGKTRHDYGREAFIDKIWEWKAESGGTITRQMRRLGNSVDWERERFTMDEGLSNAVKEVFVRLYKEDLIYRGKRLVNWDPKLRTAISDLEVENRESKGSMWHIRYPLADGAKAADGKDYLVVATTRPETLLGDTGVAVNPEDPRYKDLIGKYVILPLVNRRIPIVGDEHAYMEKGTGCVKITPAHDFNDYEVGKRHALPMINILTFDGDIRESAQVFDTKGNESDVYSSEIPAEFQKLERFAARKAVVAAVDALGLLEEIKPHDLTVPYGDRGGVVIEPMLTDQWYVRADVLAKPAVEAVENGDIQFVPKQYENMYFSWMRDIQDWCISRQLWWGHRIPAWYDEAGNVYVGRNEEEVRKENNLGADVALRQDEDVLDTWFSSALWTFSTLGWPENTDALRQFHPSSVMVSGFDIIFFWIARMIMMTMHFIKDENGTPQVPFHTVYMTGLIRDDEGQKMSKSKGNVIDPLDMVDGISLPELLEKRTGNMMQPQLADKIRKRTEKQFPNGIEPHGTDALRFTLAALASTGRDINWDMKRLEGYRNFCNKLWNASRFVLMNTEGQDCGFNGGEMTLSLADRWILAEFNQTIKAYREALDSFRFDIAAGILYEFTWNQFCDWYLELTKPVMNGGTEAELRGTHHTLVTVLEGLLRLAHPIIPFITETIWQRVKVLCGITADTIMLQPFPQYDASQVDEAALADTEWLKQAIVAVRNIRAEMNIAPGKPLELLLRGCSADAERRVNENRGFLQTLARLESITVLPADDKGPVSVTKIIDGAELLIPMAGLINKEDELARLAKEVAKIEGEISRIENKLANEGFVARAPEAVIAKEREKLEGYAEAKAKLIEQQAVIAAL.

The short motif at 42–52 (PNVTGSLHMGH) is the 'HIGH' region element. The short motif at 554-558 (KMSKS) is the 'KMSKS' region element. Lysine 557 lines the ATP pocket. Residues 880 to 944 (AGLINKEDEL…AEAKAKLIEQ (65 aa)) are a coiled coil.

It belongs to the class-I aminoacyl-tRNA synthetase family. ValS type 1 subfamily. In terms of assembly, monomer.

It localises to the cytoplasm. The catalysed reaction is tRNA(Val) + L-valine + ATP = L-valyl-tRNA(Val) + AMP + diphosphate. Catalyzes the attachment of valine to tRNA(Val). As ValRS can inadvertently accommodate and process structurally similar amino acids such as threonine, to avoid such errors, it has a 'posttransfer' editing activity that hydrolyzes mischarged Thr-tRNA(Val) in a tRNA-dependent manner. The sequence is that of Valine--tRNA ligase from Shigella dysenteriae serotype 1 (strain Sd197).